Consider the following 470-residue polypeptide: Membrane-bound lytic murein transglycosylase F (470 aa).

The first 21 residues, 1-21, serve as a signal peptide directing secretion; that stretch reads MLKEKLIIIITLVMLLCACDI. The non-LT domain stretch occupies residues 22-259; sequence QEQSTQLAQI…VLEEKYFGHV (238 aa). The tract at residues 260–470 is LT domain; the sequence is RQFNYVNTLA…PKIGDEVEAK (211 aa). Glu-304 is a catalytic residue.

It in the N-terminal section; belongs to the bacterial solute-binding protein 3 family. In the C-terminal section; belongs to the transglycosylase Slt family.

The protein localises to the cell outer membrane. It carries out the reaction Exolytic cleavage of the (1-&gt;4)-beta-glycosidic linkage between N-acetylmuramic acid (MurNAc) and N-acetylglucosamine (GlcNAc) residues in peptidoglycan, from either the reducing or the non-reducing ends of the peptidoglycan chains, with concomitant formation of a 1,6-anhydrobond in the MurNAc residue.. Functionally, murein-degrading enzyme that degrades murein glycan strands and insoluble, high-molecular weight murein sacculi, with the concomitant formation of a 1,6-anhydromuramoyl product. Lytic transglycosylases (LTs) play an integral role in the metabolism of the peptidoglycan (PG) sacculus. Their lytic action creates space within the PG sacculus to allow for its expansion as well as for the insertion of various structures such as secretion systems and flagella. This is Membrane-bound lytic murein transglycosylase F from Pseudoalteromonas translucida (strain TAC 125).